The chain runs to 147 residues: uncharacterized protein (147 aa).

Transmembrane regions (helical) follow at residues L21–V41 and A67–L87.

The protein resides in the cell membrane. This is an uncharacterized protein from Ureaplasma parvum serovar 3 (strain ATCC 700970).